The chain runs to 339 residues: Ketol-acid reductoisomerase (NADP(+)) (339 aa).

The 182-residue stretch at 1–182 folds into the KARI N-terminal Rossmann domain; the sequence is MRVYYDRDAD…GGGRSGVIET (182 aa). NADP(+) contacts are provided by residues 24 to 27, Arg48, Ser51, Thr53, and 83 to 86; these read YGSQ and DELQ. Residue His108 is part of the active site. Gly134 is an NADP(+) binding site. The KARI C-terminal knotted domain occupies 183 to 328; sequence TFKEECETDL…GKLRAMMPWI (146 aa). Mg(2+) is bound by residues Asp191, Glu195, Glu227, and Glu231. Residue Ser252 participates in substrate binding.

It belongs to the ketol-acid reductoisomerase family. Mg(2+) serves as cofactor.

It catalyses the reaction (2R)-2,3-dihydroxy-3-methylbutanoate + NADP(+) = (2S)-2-acetolactate + NADPH + H(+). It carries out the reaction (2R,3R)-2,3-dihydroxy-3-methylpentanoate + NADP(+) = (S)-2-ethyl-2-hydroxy-3-oxobutanoate + NADPH + H(+). It functions in the pathway amino-acid biosynthesis; L-isoleucine biosynthesis; L-isoleucine from 2-oxobutanoate: step 2/4. Its pathway is amino-acid biosynthesis; L-valine biosynthesis; L-valine from pyruvate: step 2/4. Involved in the biosynthesis of branched-chain amino acids (BCAA). Catalyzes an alkyl-migration followed by a ketol-acid reduction of (S)-2-acetolactate (S2AL) to yield (R)-2,3-dihydroxy-isovalerate. In the isomerase reaction, S2AL is rearranged via a Mg-dependent methyl migration to produce 3-hydroxy-3-methyl-2-ketobutyrate (HMKB). In the reductase reaction, this 2-ketoacid undergoes a metal-dependent reduction by NADPH to yield (R)-2,3-dihydroxy-isovalerate. The chain is Ketol-acid reductoisomerase (NADP(+)) from Brucella melitensis biotype 2 (strain ATCC 23457).